The sequence spans 155 residues: Biotin carboxyl carrier protein of acetyl-CoA carboxylase (155 aa).

The Biotinyl-binding domain occupies 72–155 (AASDELSGHL…EFDEPLIVIE (84 aa)). Position 121 is an N6-biotinyllysine (Lys-121).

As to quaternary structure, homodimer.

Its pathway is lipid metabolism; fatty acid biosynthesis. In terms of biological role, this protein is a component of the acetyl coenzyme A carboxylase complex; first, biotin carboxylase catalyzes the carboxylation of the carrier protein and then the transcarboxylase transfers the carboxyl group to form malonyl-CoA. The sequence is that of Biotin carboxyl carrier protein of acetyl-CoA carboxylase (accB) from Haemophilus influenzae (strain ATCC 51907 / DSM 11121 / KW20 / Rd).